A 763-amino-acid polypeptide reads, in one-letter code: Disintegrin and metalloproteinase domain-containing protein 29 (763 aa).

Residues 1–31 form the signal peptide; sequence MNMIEALLSMRVLFLTQVFGIFLCFPGLTKA. Residues 32–200 constitute a propeptide that is removed on maturation; it reads GHLHYHSSIE…ILKQSSFEDW (169 aa). N-linked (GlcNAc...) asparagine glycosylation is found at Asn164, Asn177, and Asn223. Over 201-684 the chain is Extracellular; that stretch reads WTHTKIVELV…KTNKKKHFFY (484 aa). In terms of domain architecture, Peptidase M12B spans 205–396; that stretch reads KIVELVVVVD…NTRCLMENMY (192 aa). Intrachain disulfides connect Cys313–Cys390, Cys353–Cys375, and Cys355–Cys360. 5 N-linked (GlcNAc...) asparagine glycosylation sites follow: Asn374, Asn424, Asn434, Asn475, and Asn584. A Disintegrin domain is found at 403 to 489; sequence RTRCGNGVVE…ECPDDAYVED (87 aa). Cysteines 461 and 481 form a disulfide. Intrachain disulfides connect Cys631–Cys642, Cys636–Cys648, and Cys650–Cys659. In terms of domain architecture, EGF-like spans 631–660; the sequence is CTPAFCNYRGICNNKHHCHCNFHWDPPNCM. A helical transmembrane segment spans residues 685–705; that stretch reads LLLLQLIILACLLSCLLWLLF. Residues 706–763 are Cytoplasmic-facing; the sequence is NIKGSKRKPQVQPTPVKTKKVSKKVPSQKPSPVPSPSLPQLRMPSRSASPTSSIKSTN. Positions 712–763 are disordered; sequence RKPQVQPTPVKTKKVSKKVPSQKPSPVPSPSLPQLRMPSRSASPTSSIKSTN. The segment covering 751 to 763 has biased composition (polar residues); the sequence is RSASPTSSIKSTN.

Its subcellular location is the membrane. In terms of biological role, may be involved in spermatogenesis and fertilization. Seems to be a non catalytic metalloprotease-like protein. The protein is Disintegrin and metalloproteinase domain-containing protein 29 (Adam29) of Mus musculus (Mouse).